We begin with the raw amino-acid sequence, 205 residues long: MKAFAGSFQPWIPQCRSPCICEVAASKDNGVLERPCSTLSVIVNIAVKKSYINPSPPAKMKFTIPATLGLMVSLSSAAAISGTVSLSYDPKYDNAGLSLTQVTCSDGTNGLITKGFTTAGSLPNFPNIGGSFAVEGYNSANCGKCFKVTWPVLNKSIFVTSIDKADGFNVAKAAMDTLTNNQAGQLGRIDVTFEDALPTDCGFKA.

Belongs to the cerato-platanin family.

The protein localises to the secreted. The protein is Allergen Asp f 15 homolog of Arthroderma benhamiae (strain ATCC MYA-4681 / CBS 112371) (Trichophyton mentagrophytes).